A 146-amino-acid chain; its full sequence is Wheatwin-1 (146 aa).

Residues 1–21 form the signal peptide; the sequence is MAARPMLVVALLCAAAAAATA. A Pyrrolidone carboxylic acid modification is found at glutamine 22. Residues 22–146 enclose the Barwin domain; sequence QQATNVRATY…VNYQFVDCRD (125 aa). 3 cysteine pairs are disulfide-bonded: cysteine 52–cysteine 84, cysteine 73–cysteine 107, and cysteine 87–cysteine 144.

Monomer.

Its activity is regulated as follows. Inhibited by 5'-ADP. Functionally, shows antifungal activity towards B.cinerea and towards the wheat-specific pathogenic fungi F.culmorum and F.graminearum (groups 1 and 2). Has ribonuclease activity. This is Wheatwin-1 (PR4A) from Triticum aestivum (Wheat).